The primary structure comprises 131 residues: Fumarate reductase subunit C (131 aa).

The next 3 membrane-spanning stretches (helical) occupy residues 30-50, 63-83, and 109-129; these read EGTA…LFAL, FLQN…ALLH, and IIKS…FVAL.

Belongs to the FrdC family. In terms of assembly, part of an enzyme complex containing four subunits: a flavoprotein (FrdA), an iron-sulfur protein (FrdB), and two hydrophobic anchor proteins (FrdC and FrdD).

The protein localises to the cell inner membrane. Functionally, two distinct, membrane-bound, FAD-containing enzymes are responsible for the catalysis of fumarate and succinate interconversion; fumarate reductase is used in anaerobic growth, and succinate dehydrogenase is used in aerobic growth. Anchors the catalytic components of the fumarate reductase complex to the cell inner membrane, binds quinones. In Shigella boydii serotype 18 (strain CDC 3083-94 / BS512), this protein is Fumarate reductase subunit C.